Reading from the N-terminus, the 147-residue chain is Hemoglobin subunit epsilon-M (147 aa).

The region spanning 3-147 (HFTPEDKTNI…VSSALGHKYH (145 aa)) is the Globin domain. Residues Ser14 and Ser51 each carry the phosphoserine modification. His64 and His93 together coordinate heme b.

It belongs to the globin family. In terms of tissue distribution, red blood cells.

Hemoglobin epsilon chain is a beta-type chain found in early embryos. The polypeptide is Hemoglobin subunit epsilon-M (HBE1) (Didelphis virginiana (North American opossum)).